Reading from the N-terminus, the 204-residue chain is Large ribosomal subunit protein eL15 (204 aa).

The segment at 155–204 (VHKHREQRGLTSAGRKSRGLGKGWRFSATRGGSQAKNWKRKNTKVFHRKR) is disordered. The span at 191–204 (NWKRKNTKVFHRKR) shows a compositional bias: basic residues.

It belongs to the eukaryotic ribosomal protein eL15 family.

This chain is Large ribosomal subunit protein eL15 (rpl-15), found in Caenorhabditis elegans.